A 327-amino-acid chain; its full sequence is Ubiquinone biosynthesis O-methyltransferase, mitochondrial (327 aa).

4 residues coordinate S-adenosyl-L-methionine: arginine 79, glycine 142, aspartate 165, and phenylalanine 210. Residues glutamate 211, glutamate 214, and histidine 215 each coordinate Mg(2+).

Belongs to the class I-like SAM-binding methyltransferase superfamily. UbiG/COQ3 family. In terms of assembly, component of a multi-subunit COQ enzyme complex, composed of at least COQ3, COQ4, COQ5, COQ6, COQ7 and COQ9. The cofactor is Mg(2+).

The protein localises to the mitochondrion inner membrane. The catalysed reaction is a 3,4-dihydroxy-5-(all-trans-polyprenyl)benzoate + S-adenosyl-L-methionine = a 4-hydroxy-3-methoxy-5-(all-trans-polyprenyl)benzoate + S-adenosyl-L-homocysteine + H(+). It carries out the reaction a 3-demethylubiquinone + S-adenosyl-L-methionine = a ubiquinone + S-adenosyl-L-homocysteine. It catalyses the reaction a 3-demethylubiquinol + S-adenosyl-L-methionine = a ubiquinol + S-adenosyl-L-homocysteine + H(+). It participates in cofactor biosynthesis; ubiquinone biosynthesis. Its function is as follows. O-methyltransferase required for two non-consecutive steps during ubiquinone biosynthesis. Catalyzes the 2 O-methylation of 3,4-dihydroxy-5-(all-trans-polyprenyl)benzoic acid into 4-hydroxy-3-methoxy-5-(all-trans-polyprenyl)benzoic acid. Also catalyzes the last step of ubiquinone biosynthesis by mediating methylation of 3-demethylubiquinone into ubiquinone. Also able to mediate the methylation of 3-demethylubiquinol into ubiquinol. In Candida albicans (Yeast), this protein is Ubiquinone biosynthesis O-methyltransferase, mitochondrial.